Reading from the N-terminus, the 107-residue chain is U1-lycotoxin-Ls1b (107 aa).

The signal sequence occupies residues 1-20 (MMKALVVVALLVTLISYSSS). Residues 21–41 (EGIDDLEADELLSLMANEQTR) constitute a propeptide that is removed on maturation. Intrachain disulfides connect C44-C59, C51-C68, C58-C86, and C70-C84.

It belongs to the neurotoxin 19 (CSTX) family. 04 (U1-Lctx) subfamily. As to expression, expressed by the venom gland.

It localises to the secreted. This Lycosa singoriensis (Wolf spider) protein is U1-lycotoxin-Ls1b.